Here is a 1296-residue protein sequence, read N- to C-terminus: Phosphoribosylformylglycinamidine synthase (1296 aa).

Residues 304 to 323 (WPGAATGSGGEIRDEGATGR) are disordered. Residues 306 to 317 (GAATGSGGEIRD) and Ala677 contribute to the ATP site. Residues Asp678, Glu717, Asn721, and Asp885 each contribute to the Mg(2+) site. Position 887 (Ser887) interacts with ATP. The span at 1000–1013 (PDCADQEHQAKQDE) shows a compositional bias: basic and acidic residues. Positions 1000–1019 (PDCADQEHQAKQDESDPGLN) are disordered. The Glutamine amidotransferase type-1 domain occupies 1043–1296 (VAVLREQGVN…MFRNARKQLG (254 aa)). Cys1136 (nucleophile) is an active-site residue. Residues His1261 and Glu1263 contribute to the active site.

In the N-terminal section; belongs to the FGAMS family. Monomer.

Its subcellular location is the cytoplasm. The enzyme catalyses N(2)-formyl-N(1)-(5-phospho-beta-D-ribosyl)glycinamide + L-glutamine + ATP + H2O = 2-formamido-N(1)-(5-O-phospho-beta-D-ribosyl)acetamidine + L-glutamate + ADP + phosphate + H(+). It functions in the pathway purine metabolism; IMP biosynthesis via de novo pathway; 5-amino-1-(5-phospho-D-ribosyl)imidazole from N(2)-formyl-N(1)-(5-phospho-D-ribosyl)glycinamide: step 1/2. Phosphoribosylformylglycinamidine synthase involved in the purines biosynthetic pathway. Catalyzes the ATP-dependent conversion of formylglycinamide ribonucleotide (FGAR) and glutamine to yield formylglycinamidine ribonucleotide (FGAM) and glutamate. This chain is Phosphoribosylformylglycinamidine synthase, found in Yersinia pestis bv. Antiqua (strain Nepal516).